The primary structure comprises 526 residues: MSTIPFRKNYVFKNWAGIYSAKPERYFQPSSIDEVVELVKSARLAEKSLVTVGSGHSPSNMCVTDEWLVNLDRLDKVQKFVEYPELHYADVTVDAGMRLYQLNEFLGAKGYSIQNLGSISEQSVAGIISTGSHGSSPYHGLISSQYVNLTIVNGKGELKFLDAENDPEVFKAALLSVGKIGIIVSATIRVVPGFNIKSTQEVITFENLLKQWDTLWTSSEFIRVWWYPYTRKCVLWRGNKTTDAQNGPAKSWWGTKLGRFFYETLLWISTKIYAPLTPFVEKFVFNRQYGKLEKSSTGDVNVTDSISGFNMDCLFSQFVDEWGCPMDNGLEVLRSLDHSIAQAAINKEFYVHVPMEVRCSNTTLPSEPLDTSKRTNTSPGPVYGNVCRPFLDNTPSHCRFAPLENVTNSQLTLYINATIYRPFGCNTPIHKWFTLFENTMMVAGGKPHWAKNFLGSTTLAAGPVKKDTDYDDFEMRGMALKVEEWYGEDLKKFRKIRKEQDPDNVFLANKQWAIINGIIDPSELSD.

Positions tyrosine 19–glycine 193 constitute an FAD-binding PCMH-type domain. At histidine 56 the chain carries Pros-8alpha-FAD histidine.

Belongs to the oxygen-dependent FAD-linked oxidoreductase family. Monomer. FAD is required as a cofactor. Post-translationally, the N-terminus is blocked.

It is found in the mitochondrion membrane. The catalysed reaction is D-arabinono-1,4-lactone + O2 = dehydro-D-arabinono-1,4-lactone + H2O2 + H(+). It functions in the pathway cofactor biosynthesis; D-erythroascorbate biosynthesis; dehydro-D-arabinono-1,4-lactone from D-arabinose: step 2/2. Can oxidize L-gulono-1,4-lactone as well as D-arabinono-1,4-lactone and L-galactono-1,4-lactone. This chain is D-arabinono-1,4-lactone oxidase (ALO1), found in Saccharomyces cerevisiae (strain ATCC 204508 / S288c) (Baker's yeast).